A 367-amino-acid chain; its full sequence is Isocitrate dehydrogenase [NAD] regulatory subunit 1, mitochondrial (367 aa).

The transit peptide at 1 to 25 (MSRRSLTLLKNLARNANGSGIQTRS) directs the protein to the mitochondrion.

The protein belongs to the isocitrate and isopropylmalate dehydrogenases family. Heterooligomer of catalytic and regulatory subunits. Ubiquitous. Predominantly expressed in roots, stems and leaves.

Its subcellular location is the mitochondrion. Its function is as follows. Performs an essential role in the oxidative function of the citric acid cycle. The sequence is that of Isocitrate dehydrogenase [NAD] regulatory subunit 1, mitochondrial (IDH1) from Arabidopsis thaliana (Mouse-ear cress).